A 118-amino-acid polypeptide reads, in one-letter code: Holo-[acyl-carrier-protein] synthase (118 aa).

2 residues coordinate Mg(2+): aspartate 8 and glutamate 58.

It belongs to the P-Pant transferase superfamily. AcpS family. Requires Mg(2+) as cofactor.

It localises to the cytoplasm. The catalysed reaction is apo-[ACP] + CoA = holo-[ACP] + adenosine 3',5'-bisphosphate + H(+). Its function is as follows. Transfers the 4'-phosphopantetheine moiety from coenzyme A to a Ser of acyl-carrier-protein. The polypeptide is Holo-[acyl-carrier-protein] synthase (Streptococcus uberis (strain ATCC BAA-854 / 0140J)).